The following is a 313-amino-acid chain: Ribosomal RNA small subunit methyltransferase H (313 aa).

S-adenosyl-L-methionine-binding positions include 35–37, Asp-55, Phe-79, Asp-100, and Gln-107; that span reads GGH.

Belongs to the methyltransferase superfamily. RsmH family.

It is found in the cytoplasm. It catalyses the reaction cytidine(1402) in 16S rRNA + S-adenosyl-L-methionine = N(4)-methylcytidine(1402) in 16S rRNA + S-adenosyl-L-homocysteine + H(+). Functionally, specifically methylates the N4 position of cytidine in position 1402 (C1402) of 16S rRNA. In Burkholderia pseudomallei (strain K96243), this protein is Ribosomal RNA small subunit methyltransferase H.